A 234-amino-acid polypeptide reads, in one-letter code: Proteasome subunit alpha type-6 (234 aa).

Serine 14 bears the Phosphoserine mark. A Glycyl lysine isopeptide (Lys-Gly) (interchain with G-Cter in ubiquitin) cross-link involves residue lysine 191.

The protein belongs to the peptidase T1A family. As to quaternary structure, the 26S proteasome consists of a 20S proteasome core and two 19S regulatory subunits. The 20S proteasome core is composed of 28 subunits that are arranged in four stacked rings, resulting in a barrel-shaped structure. The two end rings are each formed by seven alpha subunits, and the two central rings are each formed by seven beta subunits. The catalytic chamber with the active sites is on the inside of the barrel.

It localises to the cytoplasm. The protein resides in the nucleus. Functionally, the proteasome degrades poly-ubiquitinated proteins in the cytoplasm and in the nucleus. It is essential for the regulated turnover of proteins and for the removal of misfolded proteins. The proteasome is a multicatalytic proteinase complex that is characterized by its ability to cleave peptides with Arg, Phe, Tyr, Leu, and Glu adjacent to the leaving group at neutral or slightly basic pH. It has an ATP-dependent proteolytic activity. The chain is Proteasome subunit alpha type-6 (PRE5) from Saccharomyces cerevisiae (strain ATCC 204508 / S288c) (Baker's yeast).